We begin with the raw amino-acid sequence, 483 residues long: Cysteine--tRNA ligase (483 aa).

Position 28 (C28) interacts with Zn(2+). Residues 30-40 carry the 'HIGH' region motif; sequence MTVYDYCHLGH. Residues C212, H237, and E241 each coordinate Zn(2+). Residues 269–273 carry the 'KMSKS' region motif; sequence KMSKS. An ATP-binding site is contributed by K272.

The protein belongs to the class-I aminoacyl-tRNA synthetase family. As to quaternary structure, monomer. The cofactor is Zn(2+).

Its subcellular location is the cytoplasm. It carries out the reaction tRNA(Cys) + L-cysteine + ATP = L-cysteinyl-tRNA(Cys) + AMP + diphosphate. The polypeptide is Cysteine--tRNA ligase (Bordetella avium (strain 197N)).